A 146-amino-acid chain; its full sequence is Putative pre-16S rRNA nuclease (146 aa).

It belongs to the YqgF nuclease family.

It localises to the cytoplasm. Its function is as follows. Could be a nuclease involved in processing of the 5'-end of pre-16S rRNA. The chain is Putative pre-16S rRNA nuclease from Mycoplasmopsis pulmonis (strain UAB CTIP) (Mycoplasma pulmonis).